We begin with the raw amino-acid sequence, 1498 residues long: Transposon Ty3-I Gag-Pol polyprotein (1498 aa).

The CCHC-type zinc-finger motif lies at 265–282; sequence RLCFYCKKEGHRLNECRA. The active-site For protease activity; shared with dimeric partner is aspartate 336. Positions 470–490 are disordered; sequence TDPKSAGNRGNPRNTKLSLAP. The Reverse transcriptase domain maps to 646-823; that stretch reads LDNKFIVPSK…EETEFLGYSI (178 aa). The Mg(2+) site is built by aspartate 712, aspartate 774, and aspartate 775. The RNase H Ty3/gyspy-type domain occupies 919 to 1037; it reads DASKDGIGAV…VADAISRAIY (119 aa). The segment at 1132–1171 is integrase-type zinc finger-like; it reads HTLFGGHFGVTVTLAKISPIYYWPKLQHSIIQYIRTCVQC. Positions 1185-1350 constitute an Integrase catalytic domain; it reads LQPLPIAEGR…SPFEIDLGYL (166 aa). Mg(2+) is bound by residues aspartate 1201 and aspartate 1262.

In terms of assembly, the protease is a homodimer, whose active site consists of two apposed aspartic acid residues. In terms of processing, initially, virus-like particles (VLPs) are composed of the structural unprocessed proteins Gag and Gag-Pol, and also contain the host initiator methionine tRNA (tRNA(i)-Met) which serves as a primer for minus-strand DNA synthesis, and a dimer of genomic Ty RNA. Processing of the polyproteins occurs within the particle and proceeds by an ordered pathway, called maturation. First, the protease (PR) is released by autocatalytic cleavage of the Gag-Pol polyprotein, and this cleavage is a prerequisite for subsequent processing at the remaining sites to release the mature structural and catalytic proteins. Maturation takes place prior to the RT reaction and is required to produce transposition-competent VLPs.

It localises to the cytoplasm. The protein resides in the nucleus. It catalyses the reaction DNA(n) + a 2'-deoxyribonucleoside 5'-triphosphate = DNA(n+1) + diphosphate. The enzyme catalyses Endonucleolytic cleavage to 5'-phosphomonoester.. In terms of biological role, capsid protein (CA) is the structural component of the virus-like particle (VLP), forming the shell that encapsulates the genomic RNA-nucleocapsid complex. Functionally, nucleocapsid protein p11 (NC) forms the nucleocore that coats the retro-elements dimeric RNA. Binds these RNAs through its zinc fingers. Promotes primer tRNA(i)-Met annealing to the multipartite primer-binding site (PBS), dimerization of Ty3 RNA and initiation of reverse transcription. Its function is as follows. The aspartyl protease (PR) mediates the proteolytic cleavages of the Gag and Gag-Pol polyproteins after assembly of the VLP. Reverse transcriptase/ribonuclease H (RT) is a multifunctional enzyme that catalyzes the conversion of the retro-elements RNA genome into dsDNA within the VLP. The enzyme displays a DNA polymerase activity that can copy either DNA or RNA templates, and a ribonuclease H (RNase H) activity that cleaves the RNA strand of RNA-DNA heteroduplexes during plus-strand synthesis and hydrolyzes RNA primers. The conversion leads to a linear dsDNA copy of the retrotransposon that includes long terminal repeats (LTRs) at both ends. In terms of biological role, integrase (IN) targets the VLP to the nucleus, where a subparticle preintegration complex (PIC) containing at least integrase and the newly synthesized dsDNA copy of the retrotransposon must transit the nuclear membrane. Once in the nucleus, integrase performs the integration of the dsDNA into the host genome. The polypeptide is Transposon Ty3-I Gag-Pol polyprotein (TY3B-I) (Saccharomyces cerevisiae (strain ATCC 204508 / S288c) (Baker's yeast)).